The chain runs to 311 residues: Dermonecrotic toxin LlSicTox-alphaIII1i (311 aa).

Residues 1 to 21 form the signal peptide; that stretch reads MYAHLALILGCWTVVLQGAET. The propeptide occupies 22 to 26; sequence DVGER. His-38 is an active-site residue. Residues Glu-58 and Asp-60 each contribute to the Mg(2+) site. His-73 (nucleophile) is an active-site residue. Cysteines 77 and 83 form a disulfide. Asp-117 provides a ligand contact to Mg(2+).

Belongs to the arthropod phospholipase D family. Class I subfamily. It depends on Mg(2+) as a cofactor. As to expression, expressed by the venom gland.

It is found in the secreted. It carries out the reaction an N-(acyl)-sphingosylphosphocholine = an N-(acyl)-sphingosyl-1,3-cyclic phosphate + choline. The enzyme catalyses an N-(acyl)-sphingosylphosphoethanolamine = an N-(acyl)-sphingosyl-1,3-cyclic phosphate + ethanolamine. It catalyses the reaction a 1-acyl-sn-glycero-3-phosphocholine = a 1-acyl-sn-glycero-2,3-cyclic phosphate + choline. The catalysed reaction is a 1-acyl-sn-glycero-3-phosphoethanolamine = a 1-acyl-sn-glycero-2,3-cyclic phosphate + ethanolamine. Its function is as follows. Dermonecrotic toxins cleave the phosphodiester linkage between the phosphate and headgroup of certain phospholipids (sphingolipid and lysolipid substrates), forming an alcohol (often choline) and a cyclic phosphate. This toxin acts on sphingomyelin (SM) with high activity. It also act on acyl- and alkyl-lysophosphatidylcholine (LPC), but not on sphingosylphosphorylcholine (SPC) and phosphatidylcholine (PC). It may also act on ceramide phosphoethanolamine (CPE), and lysophosphatidylethanolamine (LPE), but not on lysophosphatidylserine (LPS), and lysophosphatidylglycerol (LPG). It acts by transphosphatidylation, releasing exclusively cyclic phosphate products as second products. Induces complement-dependent hemolysis and dermonecrosis. Also induces increased vascular permeability, edema, inflammatory response, and platelet aggregation. This chain is Dermonecrotic toxin LlSicTox-alphaIII1i, found in Loxosceles laeta (South American recluse spider).